Here is a 429-residue protein sequence, read N- to C-terminus: Glutamyl-tRNA reductase (429 aa).

Substrate-binding positions include 52–55, S110, 115–117, and Q121; these read TCNR and EAQ. C53 serves as the catalytic Nucleophile. Residue 190 to 195 coordinates NADP(+); that stretch reads GAGAMI.

It belongs to the glutamyl-tRNA reductase family. In terms of assembly, homodimer.

The catalysed reaction is (S)-4-amino-5-oxopentanoate + tRNA(Glu) + NADP(+) = L-glutamyl-tRNA(Glu) + NADPH + H(+). It functions in the pathway porphyrin-containing compound metabolism; protoporphyrin-IX biosynthesis; 5-aminolevulinate from L-glutamyl-tRNA(Glu): step 1/2. Functionally, catalyzes the NADPH-dependent reduction of glutamyl-tRNA(Glu) to glutamate 1-semialdehyde (GSA). The protein is Glutamyl-tRNA reductase of Verminephrobacter eiseniae (strain EF01-2).